The chain runs to 117 residues: Large ribosomal subunit protein bL20 (117 aa).

Belongs to the bacterial ribosomal protein bL20 family.

Functionally, binds directly to 23S ribosomal RNA and is necessary for the in vitro assembly process of the 50S ribosomal subunit. It is not involved in the protein synthesizing functions of that subunit. The protein is Large ribosomal subunit protein bL20 of Rickettsia rickettsii (strain Iowa).